The chain runs to 375 residues: Chaperone protein DnaJ (375 aa).

Residues 6–71 enclose the J domain; it reads DYYEVLGVPK…EKRRQYDQFG (66 aa). The segment at 138 to 220 adopts a CR-type zinc-finger fold; sequence GTTKKIDVTL…CYGTGYISSK (83 aa). Zn(2+)-binding residues include C151, C154, C168, C171, C194, C197, C208, and C211. CXXCXGXG motif repeat units lie at residues 151-158, 168-175, 194-201, and 208-215; these read CSSCHGTG, CSKCGGRG, CPDCHGTG, and CPDCYGTG.

The protein belongs to the DnaJ family. Homodimer. It depends on Zn(2+) as a cofactor.

The protein resides in the cytoplasm. Functionally, participates actively in the response to hyperosmotic and heat shock by preventing the aggregation of stress-denatured proteins and by disaggregating proteins, also in an autonomous, DnaK-independent fashion. Unfolded proteins bind initially to DnaJ; upon interaction with the DnaJ-bound protein, DnaK hydrolyzes its bound ATP, resulting in the formation of a stable complex. GrpE releases ADP from DnaK; ATP binding to DnaK triggers the release of the substrate protein, thus completing the reaction cycle. Several rounds of ATP-dependent interactions between DnaJ, DnaK and GrpE are required for fully efficient folding. Also involved, together with DnaK and GrpE, in the DNA replication of plasmids through activation of initiation proteins. This chain is Chaperone protein DnaJ, found in Lachnospira eligens (strain ATCC 27750 / DSM 3376 / VPI C15-48 / C15-B4) (Eubacterium eligens).